The chain runs to 266 residues: UPF0354 protein lwe1624 (266 aa).

Belongs to the UPF0354 family.

This chain is UPF0354 protein lwe1624, found in Listeria welshimeri serovar 6b (strain ATCC 35897 / DSM 20650 / CCUG 15529 / CIP 8149 / NCTC 11857 / SLCC 5334 / V8).